The chain runs to 563 residues: Germacrene-A synthase (563 aa).

Positions 316, 320, 461, and 469 each coordinate Mg(2+). The short motif at 316 to 320 is the DDXXD motif element; it reads DDIYD.

The protein belongs to the terpene synthase family. Tpsa subfamily. Mg(2+) is required as a cofactor. Expressed in young leaves. Detected in trichomes and cones.

It catalyses the reaction (2E,6E)-farnesyl diphosphate = (+)-(R)-germacrene A + diphosphate. It participates in secondary metabolite biosynthesis; terpenoid biosynthesis. Functionally, sesquiterpene synthase that catalyzes the formation of germacrene A. Can use farnesyl diphosphate as substrate, but not geranyl diphosphate or geranylgeranyl diphosphate. Beta-elemene, the initially measured product in the assay, is derived nonenzymatically from germacrene A. This is Germacrene-A synthase from Humulus lupulus (European hop).